A 392-amino-acid chain; its full sequence is S-adenosylmethionine synthase (392 aa).

Position 20 (His-20) interacts with ATP. Asp-22 contributes to the Mg(2+) binding site. Glu-48 contributes to the K(+) binding site. The L-methionine site is built by Glu-61 and Gln-106. Residues 106 to 116 (QSRDIINAIEK) form a flexible loop region. ATP contacts are provided by residues 171–173 (DSK), Asp-248, 254–255 (RK), Ala-271, and Lys-275. An L-methionine-binding site is contributed by Asp-248. Lys-279 lines the L-methionine pocket.

This sequence belongs to the AdoMet synthase family. As to quaternary structure, homotetramer; dimer of dimers. Mg(2+) serves as cofactor. It depends on K(+) as a cofactor.

The protein localises to the cytoplasm. It catalyses the reaction L-methionine + ATP + H2O = S-adenosyl-L-methionine + phosphate + diphosphate. It functions in the pathway amino-acid biosynthesis; S-adenosyl-L-methionine biosynthesis; S-adenosyl-L-methionine from L-methionine: step 1/1. Catalyzes the formation of S-adenosylmethionine (AdoMet) from methionine and ATP. The overall synthetic reaction is composed of two sequential steps, AdoMet formation and the subsequent tripolyphosphate hydrolysis which occurs prior to release of AdoMet from the enzyme. In Borreliella burgdorferi (strain ATCC 35210 / DSM 4680 / CIP 102532 / B31) (Borrelia burgdorferi), this protein is S-adenosylmethionine synthase.